The chain runs to 326 residues: ATP-dependent 6-phosphofructokinase 2 (326 aa).

Position 14 (G14) interacts with ATP. 24–28 (RAVTR) serves as a coordination point for ADP. ATP-binding positions include 75 to 76 (RC) and 105 to 108 (GDGS). D106 serves as a coordination point for Mg(2+). A substrate-binding site is contributed by 129-131 (TID). D131 acts as the Proton acceptor in catalysis. Residue R158 coordinates ADP. Residues R166 and 173-175 (MGR) contribute to the substrate site. Residues 189-191 (GAE), K215, and 217-219 (KNS) each bind ADP. Residues E226, R250, and 256–259 (HLQR) each bind substrate.

It belongs to the phosphofructokinase type A (PFKA) family. ATP-dependent PFK group I subfamily. Prokaryotic clade 'B1' sub-subfamily. Homotetramer. Mg(2+) serves as cofactor.

The protein localises to the cytoplasm. It carries out the reaction beta-D-fructose 6-phosphate + ATP = beta-D-fructose 1,6-bisphosphate + ADP + H(+). It functions in the pathway carbohydrate degradation; glycolysis; D-glyceraldehyde 3-phosphate and glycerone phosphate from D-glucose: step 3/4. Its activity is regulated as follows. Allosterically activated by ADP and other diphosphonucleosides, and allosterically inhibited by phosphoenolpyruvate. Its function is as follows. Catalyzes the phosphorylation of D-fructose 6-phosphate to fructose 1,6-bisphosphate by ATP, the first committing step of glycolysis. In Bacteroides thetaiotaomicron (strain ATCC 29148 / DSM 2079 / JCM 5827 / CCUG 10774 / NCTC 10582 / VPI-5482 / E50), this protein is ATP-dependent 6-phosphofructokinase 2.